The primary structure comprises 379 residues: Tryptophan 2,3-dioxygenase (379 aa).

Substrate contacts are provided by residues 57-61 (FIITH) and arginine 128. A heme-binding site is contributed by histidine 312. Threonine 327 is a substrate binding site.

Belongs to the tryptophan 2,3-dioxygenase family. In terms of assembly, homotetramer. Dimer of dimers. Heme is required as a cofactor.

The enzyme catalyses L-tryptophan + O2 = N-formyl-L-kynurenine. Its pathway is amino-acid degradation; L-tryptophan degradation via kynurenine pathway; L-kynurenine from L-tryptophan: step 1/2. It participates in pigment biosynthesis; ommochrome biosynthesis. Its function is as follows. Heme-dependent dioxygenase that catalyzes the oxidative cleavage of the L-tryptophan (L-Trp) pyrrole ring and converts L-tryptophan to N-formyl-L-kynurenine. Catalyzes the oxidative cleavage of the indole moiety. This is Tryptophan 2,3-dioxygenase from Drosophila erecta (Fruit fly).